Here is a 119-residue protein sequence, read N- to C-terminus: Small ribosomal subunit protein uS10 (119 aa).

Ala2 bears the N-acetylalanine mark. Lys4 participates in a covalent cross-link: Glycyl lysine isopeptide (Lys-Gly) (interchain with G-Cter in ubiquitin). An N6-succinyllysine; alternate modification is found at Lys8. Residue Lys8 forms a Glycyl lysine isopeptide (Lys-Gly) (interchain with G-Cter in ubiquitin); alternate linkage. The residue at position 9 (Thr9) is a Phosphothreonine. 2 positions are modified to N6-acetyllysine: Lys34 and Lys75. Ser93 is subject to Phosphoserine.

It belongs to the universal ribosomal protein uS10 family. As to quaternary structure, component of the 40S small ribosomal subunit. In terms of processing, polyubiquitinated by ZNF598 via 'Lys-63'-linked ubiquitin chains when a ribosome has stalled, initiating the ribosome quality control (RQC) pathway to degrade the potentially detrimental aberrant nascent polypeptide. Deubiquitinated by OTUD3 and USP21, antagonizing ZNF598 activity. Ufmylated by UFL1.

The protein resides in the cytoplasm. Functionally, component of the small ribosomal subunit. The ribosome is a large ribonucleoprotein complex responsible for the synthesis of proteins in the cell. The chain is Small ribosomal subunit protein uS10 (RPS20) from Pongo abelii (Sumatran orangutan).